Reading from the N-terminus, the 492-residue chain is Citrate synthase, peroxisomal (492 aa).

Residues His307, His346, and Asp402 contribute to the active site. The interval 469 to 492 (PAKVRSQDSYSSATTKRYSKVTSH) is disordered. A compositionally biased stretch (polar residues) spans 475-484 (QDSYSSATTK).

This sequence belongs to the citrate synthase family.

The protein localises to the peroxisome. The enzyme catalyses oxaloacetate + acetyl-CoA + H2O = citrate + CoA + H(+). It participates in carbohydrate metabolism; tricarboxylic acid cycle; isocitrate from oxaloacetate: step 1/2. In terms of biological role, peroxisomal protein involved in the cellular biosynthesis of citrate, and required primarily for cell growth and modulation of multicellular development. The sequence is that of Citrate synthase, peroxisomal (cshA) from Dictyostelium discoideum (Social amoeba).